The chain runs to 146 residues: 3-dehydroquinate dehydratase (146 aa).

Y22 (proton acceptor) is an active-site residue. 3 residues coordinate substrate: N74, H80, and D87. H100 (proton donor) is an active-site residue. Residues L101–S102 and R111 each bind substrate.

This sequence belongs to the type-II 3-dehydroquinase family. As to quaternary structure, homododecamer.

The catalysed reaction is 3-dehydroquinate = 3-dehydroshikimate + H2O. The protein operates within metabolic intermediate biosynthesis; chorismate biosynthesis; chorismate from D-erythrose 4-phosphate and phosphoenolpyruvate: step 3/7. Catalyzes a trans-dehydration via an enolate intermediate. The protein is 3-dehydroquinate dehydratase of Clostridium perfringens (strain SM101 / Type A).